Consider the following 122-residue polypeptide: Large ribosomal subunit protein uL14 (122 aa).

It belongs to the universal ribosomal protein uL14 family. Part of the 50S ribosomal subunit. Forms a cluster with proteins L3 and L19. In the 70S ribosome, L14 and L19 interact and together make contacts with the 16S rRNA in bridges B5 and B8.

Its function is as follows. Binds to 23S rRNA. Forms part of two intersubunit bridges in the 70S ribosome. The sequence is that of Large ribosomal subunit protein uL14 from Psychrobacter sp. (strain PRwf-1).